The sequence spans 426 residues: Probable serine/threonine-protein kinase PBL3 (426 aa).

Residues 1 to 42 (MGNCLDSSAKVDSSSHSPHANSASLSSRVSSKTSRSTVPSSL) are disordered. A lipid anchor (N-myristoyl glycine) is attached at G2. C4 is lipidated: S-palmitoyl cysteine. Over residues 7–42 (SSAKVDSSSHSPHANSASLSSRVSSKTSRSTVPSSL) the composition is skewed to low complexity. Residue T72 is modified to Phosphothreonine. Residues 83-366 (FRPDSLLGEG…SEVLAKLDQL (284 aa)) enclose the Protein kinase domain. Residues 89 to 97 (LGEGGFGYV) and K121 contribute to the ATP site. Y166 is subject to Phosphotyrosine. The active-site Proton acceptor is the D216. S250 carries the post-translational modification Phosphoserine. Phosphothreonine occurs at positions 251 and 256. Y264 carries the phosphotyrosine modification. The span at 367-394 (ESTKPGTGVGNRQAQIDSPRGSNGSIVQ) shows a compositional bias: polar residues. Residues 367–426 (ESTKPGTGVGNRQAQIDSPRGSNGSIVQKSPRRYSYDRPLLHITPGASPLPTHNHSPRVR) form a disordered region.

The protein belongs to the protein kinase superfamily. Ser/Thr protein kinase family. As to quaternary structure, interacts with the Xanthomonas campestris effector XopAC/AvrAC. As to expression, strongly expressed in leaves, moderately in flowers, and barely in roots.

It localises to the cell membrane. It is found in the nucleus. It carries out the reaction L-seryl-[protein] + ATP = O-phospho-L-seryl-[protein] + ADP + H(+). The catalysed reaction is L-threonyl-[protein] + ATP = O-phospho-L-threonyl-[protein] + ADP + H(+). May be involved in plant defense signaling. This chain is Probable serine/threonine-protein kinase PBL3, found in Arabidopsis thaliana (Mouse-ear cress).